The following is a 400-amino-acid chain: Elongation factor Tu (400 aa).

In terms of domain architecture, tr-type G spans 10–209 (KPHVNIGTIG…EVDKYIPTPE (200 aa)). Positions 19 to 26 (GHVDHGKT) are G1. A GTP-binding site is contributed by 19–26 (GHVDHGKT). Mg(2+) is bound at residue Thr26. The tract at residues 60–64 (GITIN) is G2. The G3 stretch occupies residues 81–84 (DCPG). Residues 81-85 (DCPGH) and 136-139 (NKAD) contribute to the GTP site. Residues 136-139 (NKAD) are G4. A G5 region spans residues 174–176 (SGL).

The protein belongs to the TRAFAC class translation factor GTPase superfamily. Classic translation factor GTPase family. EF-Tu/EF-1A subfamily. Monomer.

The protein localises to the cytoplasm. It catalyses the reaction GTP + H2O = GDP + phosphate + H(+). In terms of biological role, GTP hydrolase that promotes the GTP-dependent binding of aminoacyl-tRNA to the A-site of ribosomes during protein biosynthesis. In Heliobacterium modesticaldum (strain ATCC 51547 / Ice1), this protein is Elongation factor Tu.